Here is a 276-residue protein sequence, read N- to C-terminus: MEHKIREEMRVLPSIDPQFEIERRVAFIKRKLTEARCKSLVLGISGGVDSTTCGRLAQLAVEELNQQHNTTEYQFIAVRLPYGEQKDEDEAQLALSFIRPTHSVSVNIKAGVDGLHAASHHALANTGLIPSDPAKVDFIKGNVKARARMVAQYEIAGYVGGLVLGTDHSAENITGFYTKFGDGACDLAPLFGLNKRQVRLLAKTLGAPEQLVYKTPTADLEELAPQKADEAALNLTYEQIDDFLEGKAVPAEVSQRLVAIYHATQHKRQPIPTIYD.

43–50 (GISGGVDS) contributes to the ATP binding site. A Mg(2+)-binding site is contributed by Asp49. Position 146 (Arg146) interacts with deamido-NAD(+). Residue Thr166 participates in ATP binding. Glu171 is a Mg(2+) binding site. Residues Lys179 and Asp186 each contribute to the deamido-NAD(+) site. 2 residues coordinate ATP: Lys195 and Thr217. A deamido-NAD(+)-binding site is contributed by 266 to 267 (HK).

It belongs to the NAD synthetase family. Homodimer.

It carries out the reaction deamido-NAD(+) + NH4(+) + ATP = AMP + diphosphate + NAD(+) + H(+). Its pathway is cofactor biosynthesis; NAD(+) biosynthesis; NAD(+) from deamido-NAD(+) (ammonia route): step 1/1. Functionally, catalyzes the ATP-dependent amidation of deamido-NAD to form NAD. Uses ammonia as a nitrogen source. This Vibrio cholerae serotype O1 (strain ATCC 39541 / Classical Ogawa 395 / O395) protein is NH(3)-dependent NAD(+) synthetase.